The chain runs to 382 residues: Glutamyl-tRNA reductase (382 aa).

Substrate-binding positions include 38 to 41 (TCNR), S85, 90 to 92 (ENQ), and Q96. Residue C39 is the Nucleophile of the active site. 164–169 (GAGEMG) lines the NADP(+) pocket.

Belongs to the glutamyl-tRNA reductase family. In terms of assembly, homodimer.

It carries out the reaction (S)-4-amino-5-oxopentanoate + tRNA(Glu) + NADP(+) = L-glutamyl-tRNA(Glu) + NADPH + H(+). The protein operates within porphyrin-containing compound metabolism; protoporphyrin-IX biosynthesis; 5-aminolevulinate from L-glutamyl-tRNA(Glu): step 1/2. Functionally, catalyzes the NADPH-dependent reduction of glutamyl-tRNA(Glu) to glutamate 1-semialdehyde (GSA). This chain is Glutamyl-tRNA reductase, found in Methanococcus maripaludis (strain C5 / ATCC BAA-1333).